The chain runs to 474 residues: UDP-N-acetylmuramoylalanine--D-glutamate ligase (474 aa).

Residue 134–140 participates in ATP binding; the sequence is GSNGKST.

The protein belongs to the MurCDEF family.

It localises to the cytoplasm. The catalysed reaction is UDP-N-acetyl-alpha-D-muramoyl-L-alanine + D-glutamate + ATP = UDP-N-acetyl-alpha-D-muramoyl-L-alanyl-D-glutamate + ADP + phosphate + H(+). It functions in the pathway cell wall biogenesis; peptidoglycan biosynthesis. Its function is as follows. Cell wall formation. Catalyzes the addition of glutamate to the nucleotide precursor UDP-N-acetylmuramoyl-L-alanine (UMA). The chain is UDP-N-acetylmuramoylalanine--D-glutamate ligase from Thiobacillus denitrificans (strain ATCC 25259 / T1).